Here is a 446-residue protein sequence, read N- to C-terminus: Neuropeptide Y receptor type 5 (446 aa).

Over 1–42 (MGSEIPDYYNKTLASENNTVATRNSGFPVWEDYKGSVDDLQY) the chain is Extracellular. Asn10 and Asn17 each carry an N-linked (GlcNAc...) asparagine glycan. A helical membrane pass occupies residues 43–63 (FLIGLYTFVSLLGFMGNLLIL). The Cytoplasmic portion of the chain corresponds to 64–77 (MAVMRKRNQKTTVN). The chain crosses the membrane as a helical span at residues 78–98 (FLIGNLAFSDILVVLFCSPFT). Topologically, residues 99–117 (LTSVLLDQWMFGKVMCHIM) are extracellular. Cysteines 114 and 198 form a disulfide. The helical transmembrane segment at 118–138 (PFLQCVTVLVSTLILISIAIV) threads the bilayer. Residues 139–156 (RYHMIKHPVSNNLTANHG) lie on the Cytoplasmic side of the membrane. The helical transmembrane segment at 157-177 (YFLIATVWTLGLAICSPLPVF) threads the bilayer. Topologically, residues 178–208 (HSLVELQESFGSAWLSSRYLCVESWPSDSYR) are extracellular. Residues 209 to 229 (IAFTISLLLVQYILPLVCLTV) form a helical membrane-spanning segment. Residues 230-369 (SHTSVCRTIS…RKRSRSVFYR (140 aa)) lie on the Cytoplasmic side of the membrane. The interval 297 to 325 (RPAPAGPALESREGRPPGKVGSMQSQPPP) is disordered. The chain crosses the membrane as a helical span at residues 370–390 (LTVLILVFAVSWMPLHLFHVV). Residues 391–407 (TDFNDNLISNRHFKLVY) lie on the Extracellular side of the membrane. A helical membrane pass occupies residues 408-428 (CICHLLGMMSCCLNPILYGFL). The Cytoplasmic portion of the chain corresponds to 429–446 (NNGIKADLMSLIHCLHVS). Cys442 is lipidated: S-palmitoyl cysteine.

It belongs to the G-protein coupled receptor 1 family.

Its subcellular location is the cell membrane. In terms of biological role, receptor for neuropeptide Y and peptide YY. The activity of this receptor is mediated by G proteins that inhibit adenylate cyclase activity. Seems to be associated with food intake. Could be involved in feeding disorders. This is Neuropeptide Y receptor type 5 (NPY5R) from Sus scrofa (Pig).